Here is a 374-residue protein sequence, read N- to C-terminus: Putative F-box protein At5g60060 (374 aa).

Positions 9–61 constitute an F-box domain; sequence SQWSDLPLDILELISDRLDHDSSDTIHLLCLRSVCATWRLSLPLSNKNNRLSK.

The polypeptide is Putative F-box protein At5g60060 (Arabidopsis thaliana (Mouse-ear cress)).